The primary structure comprises 155 residues: SsrA-binding protein (155 aa).

Belongs to the SmpB family.

It localises to the cytoplasm. Its function is as follows. Required for rescue of stalled ribosomes mediated by trans-translation. Binds to transfer-messenger RNA (tmRNA), required for stable association of tmRNA with ribosomes. tmRNA and SmpB together mimic tRNA shape, replacing the anticodon stem-loop with SmpB. tmRNA is encoded by the ssrA gene; the 2 termini fold to resemble tRNA(Ala) and it encodes a 'tag peptide', a short internal open reading frame. During trans-translation Ala-aminoacylated tmRNA acts like a tRNA, entering the A-site of stalled ribosomes, displacing the stalled mRNA. The ribosome then switches to translate the ORF on the tmRNA; the nascent peptide is terminated with the 'tag peptide' encoded by the tmRNA and targeted for degradation. The ribosome is freed to recommence translation, which seems to be the essential function of trans-translation. This chain is SsrA-binding protein, found in Oenococcus oeni (strain ATCC BAA-331 / PSU-1).